The chain runs to 291 residues: MLKDLFKKSKYATVNPSAYKSKVVEEKPNIPSGMWTKCSNCNNMIYYEDLENNKYVCTKCNQHFRISPKERIKQIFDKDTFKEMWKSLKTNNPIDFEDYEEKINQSQSNTGSKEAVVTGVGRINDLEVACAIMDSFFMMGSMGTVVGEKITRIVEYATENNLPILIFTASGGARMQEGIFSLMQMAKISAALARHDEKGLLYITILTDPTTGGVTASFAMEGDIILSEPNTLVGFAGRRVIENTINETLPESFQKSEFLLEKGFIDSIVERKNMRAYLYKILILHGVNKYE.

Positions 34-291 (MWTKCSNCNN…LILHGVNKYE (258 aa)) constitute a CoA carboxyltransferase N-terminal domain. Zn(2+) is bound by residues Cys-38, Cys-41, Cys-57, and Cys-60. Residues 38-60 (CSNCNNMIYYEDLENNKYVCTKC) form a C4-type zinc finger.

It belongs to the AccD/PCCB family. As to quaternary structure, acetyl-CoA carboxylase is a heterohexamer composed of biotin carboxyl carrier protein (AccB), biotin carboxylase (AccC) and two subunits each of ACCase subunit alpha (AccA) and ACCase subunit beta (AccD). It depends on Zn(2+) as a cofactor.

It localises to the cytoplasm. The enzyme catalyses N(6)-carboxybiotinyl-L-lysyl-[protein] + acetyl-CoA = N(6)-biotinyl-L-lysyl-[protein] + malonyl-CoA. It functions in the pathway lipid metabolism; malonyl-CoA biosynthesis; malonyl-CoA from acetyl-CoA: step 1/1. Its function is as follows. Component of the acetyl coenzyme A carboxylase (ACC) complex. Biotin carboxylase (BC) catalyzes the carboxylation of biotin on its carrier protein (BCCP) and then the CO(2) group is transferred by the transcarboxylase to acetyl-CoA to form malonyl-CoA. The protein is Acetyl-coenzyme A carboxylase carboxyl transferase subunit beta of Clostridium botulinum (strain Eklund 17B / Type B).